The sequence spans 95 residues: Large ribosomal subunit protein uL23 (95 aa).

This sequence belongs to the universal ribosomal protein uL23 family. As to quaternary structure, part of the 50S ribosomal subunit. Contacts protein L29, and trigger factor when it is bound to the ribosome.

Its function is as follows. One of the early assembly proteins it binds 23S rRNA. One of the proteins that surrounds the polypeptide exit tunnel on the outside of the ribosome. Forms the main docking site for trigger factor binding to the ribosome. The chain is Large ribosomal subunit protein uL23 from Levilactobacillus brevis (strain ATCC 367 / BCRC 12310 / CIP 105137 / JCM 1170 / LMG 11437 / NCIMB 947 / NCTC 947) (Lactobacillus brevis).